The sequence spans 212 residues: Fucoxanthin-chlorophyll a-c binding protein E, chloroplastic (212 aa).

The transit peptide at 1–34 (MAIACAAAPGLRGAEPFNGAALATSAKSSSAMKM) directs the protein to the chloroplast. Helical transmembrane passes span 76–96 (IAML…PGML), 117–137 (IPPL…LFVV), and 178–198 (GRAA…SNQP).

The protein belongs to the fucoxanthin chlorophyll protein family. In terms of assembly, the LHC complex of chromophytic algae is composed of fucoxanthin, chlorophyll A and C bound non-covalently by fucoxanthin chlorophyll proteins (FCPs). The ratio of pigments in this LHC is; fucoxanthin: chlorophyll C: chlorophyll A; (0.6-1): (0.1-0.3): (1).

It is found in the plastid. Its subcellular location is the chloroplast thylakoid membrane. The light-harvesting complex (LHC) functions as a light receptor, it captures and delivers excitation energy to photosystems with which it is closely associated. Energy is transferred from the carotenoid and chlorophyll C (or B) to chlorophyll A and the photosynthetic reaction centers where it is used to synthesize ATP and reducing power. The chain is Fucoxanthin-chlorophyll a-c binding protein E, chloroplastic (FCPE) from Macrocystis pyrifera (Giant kelp).